A 715-amino-acid polypeptide reads, in one-letter code: Arginine kinase (715 aa).

Approximate repeat units follow at residues 1-366 (MADP…IAKK) and 367-715 (RSVF…KSTK). A Phosphagen kinase N-terminal 1 domain is found at 11–95 (KSKNAFPDPL…FDAIIEDYHS (85 aa)). 68–72 (GVGVY) contacts substrate. Positions 123 to 362 (YIRSTRIRVA…KALMELEKEA (240 aa)) constitute a Phosphagen kinase C-terminal 1 domain. ATP is bound by residues 126–130 (STRIR) and H189. E229 provides a ligand contact to substrate. R233 serves as a coordination point for ATP. C275 contacts substrate. ATP-binding positions include 284 to 288 (RASVH) and 312 to 317 (RGIHGE). E317 provides a ligand contact to substrate. The region spanning 365–447 (KKRSVFPEVL…FDKIVEDYHS (83 aa)) is the Phosphagen kinase N-terminal 2 domain. The Phosphagen kinase C-terminal 2 domain maps to 475-714 (YIRSTRIRVA…KKLLEIEKST (240 aa)).

It belongs to the ATP:guanido phosphotransferase family. Monomer.

The enzyme catalyses L-arginine + ATP = N(omega)-phospho-L-arginine + ADP + H(+). This chain is Arginine kinase, found in Anthopleura japonica (Sea anemone).